A 145-amino-acid polypeptide reads, in one-letter code: Large ribosomal subunit protein uL11 (145 aa).

It belongs to the universal ribosomal protein uL11 family. Part of the ribosomal stalk of the 50S ribosomal subunit. Interacts with L10 and the large rRNA to form the base of the stalk. L10 forms an elongated spine to which L12 dimers bind in a sequential fashion forming a multimeric L10(L12)X complex. In terms of processing, one or more lysine residues are methylated.

Forms part of the ribosomal stalk which helps the ribosome interact with GTP-bound translation factors. The sequence is that of Large ribosomal subunit protein uL11 from Porphyromonas gingivalis (strain ATCC 33277 / DSM 20709 / CIP 103683 / JCM 12257 / NCTC 11834 / 2561).